The primary structure comprises 431 residues: Phosphomethylpyrimidine synthase (431 aa).

Substrate-binding positions include Asn66, Met95, Tyr124, His163, 185–187 (SRG), 226–229 (DGLR), and Glu265. His269 is a binding site for Zn(2+). Tyr292 serves as a coordination point for substrate. His333 contributes to the Zn(2+) binding site. Positions 408, 411, and 415 each coordinate [4Fe-4S] cluster.

This sequence belongs to the ThiC family. Requires [4Fe-4S] cluster as cofactor.

The enzyme catalyses 5-amino-1-(5-phospho-beta-D-ribosyl)imidazole + S-adenosyl-L-methionine = 4-amino-2-methyl-5-(phosphooxymethyl)pyrimidine + CO + 5'-deoxyadenosine + formate + L-methionine + 3 H(+). The protein operates within cofactor biosynthesis; thiamine diphosphate biosynthesis. Its function is as follows. Catalyzes the synthesis of the hydroxymethylpyrimidine phosphate (HMP-P) moiety of thiamine from aminoimidazole ribotide (AIR) in a radical S-adenosyl-L-methionine (SAM)-dependent reaction. This is Phosphomethylpyrimidine synthase from Dehalococcoides mccartyi (strain CBDB1).